The sequence spans 184 residues: Protein GrpE (184 aa).

Residues 1 to 35 are disordered; sequence MTQENQNPPPEQEDVAADPQVNEAAASEPAAVKTP.

The protein belongs to the GrpE family. In terms of assembly, homodimer.

It is found in the cytoplasm. Functionally, participates actively in the response to hyperosmotic and heat shock by preventing the aggregation of stress-denatured proteins, in association with DnaK and GrpE. It is the nucleotide exchange factor for DnaK and may function as a thermosensor. Unfolded proteins bind initially to DnaJ; upon interaction with the DnaJ-bound protein, DnaK hydrolyzes its bound ATP, resulting in the formation of a stable complex. GrpE releases ADP from DnaK; ATP binding to DnaK triggers the release of the substrate protein, thus completing the reaction cycle. Several rounds of ATP-dependent interactions between DnaJ, DnaK and GrpE are required for fully efficient folding. The protein is Protein GrpE of Polynucleobacter asymbioticus (strain DSM 18221 / CIP 109841 / QLW-P1DMWA-1) (Polynucleobacter necessarius subsp. asymbioticus).